The primary structure comprises 225 residues: Doublesex- and mab-3-related transcription factor C1 (225 aa).

Residues 1–12 (MQRPSGSREVRK) are compositionally biased toward basic and acidic residues. Disordered stretches follow at residues 1 to 49 (MQRP…SHVH) and 179 to 216 (QTRHQPCGMPGTAGERGLQLPNPSMPPRPASSGSLPSG). Residues 27–37 (RVKKHVVRRQK) are compositionally biased toward basic residues.

Belongs to the DMRT family.

In Rattus norvegicus (Rat), this protein is Doublesex- and mab-3-related transcription factor C1 (Dmrtc1).